The chain runs to 200 residues: MAEPVIVVPRKGVYSDDSYHHHHRHHSFHSCTNFLLRTLTAGATAAAVVVMLISTQTSGTIYGYFRGRWRDYPAYKWLIIANAVVFVYSVMAAIVACFSVIARRGPLSYSPSAWLTLLVDFLAASALISAASAALAVALLARNGQDLQGTHYWPTVCNYVSKFCDYTQGAIIASFVGFGLLFLSTLLAASALYHLSHRRH.

Topologically, residues 1–33 (MAEPVIVVPRKGVYSDDSYHHHHRHHSFHSCTN) are cytoplasmic. The helical transmembrane segment at 34 to 54 (FLLRTLTAGATAAAVVVMLIS) threads the bilayer. Residues 55-77 (TQTSGTIYGYFRGRWRDYPAYKW) are Extracellular-facing. A helical transmembrane segment spans residues 78–98 (LIIANAVVFVYSVMAAIVACF). Residues 99–120 (SVIARRGPLSYSPSAWLTLLVD) are Cytoplasmic-facing. Residues 121-141 (FLAASALISAASAALAVALLA) form a helical membrane-spanning segment. The Extracellular segment spans residues 142 to 168 (RNGQDLQGTHYWPTVCNYVSKFCDYTQ). The chain crosses the membrane as a helical span at residues 169–189 (GAIIASFVGFGLLFLSTLLAA). Over 190–200 (SALYHLSHRRH) the chain is Cytoplasmic.

Belongs to the Casparian strip membrane proteins (CASP) family. In terms of assembly, homodimer and heterodimers.

It is found in the cell membrane. The chain is CASP-like protein 1U2 from Physcomitrium patens (Spreading-leaved earth moss).